We begin with the raw amino-acid sequence, 337 residues long: tRNA N6-adenosine threonylcarbamoyltransferase (337 aa).

Fe cation-binding residues include histidine 111 and histidine 115. Residues 134-138 (LVSGG), aspartate 167, glycine 180, and asparagine 272 contribute to the substrate site. A Fe cation-binding site is contributed by aspartate 300.

Belongs to the KAE1 / TsaD family. Fe(2+) serves as cofactor.

The protein resides in the cytoplasm. The catalysed reaction is L-threonylcarbamoyladenylate + adenosine(37) in tRNA = N(6)-L-threonylcarbamoyladenosine(37) in tRNA + AMP + H(+). Functionally, required for the formation of a threonylcarbamoyl group on adenosine at position 37 (t(6)A37) in tRNAs that read codons beginning with adenine. Is involved in the transfer of the threonylcarbamoyl moiety of threonylcarbamoyl-AMP (TC-AMP) to the N6 group of A37, together with TsaE and TsaB. TsaD likely plays a direct catalytic role in this reaction. The chain is tRNA N6-adenosine threonylcarbamoyltransferase from Shewanella sediminis (strain HAW-EB3).